The primary structure comprises 379 residues: NuA4 complex subunit EAF3 homolog (379 aa).

The 56-residue stretch at 6–61 (EENEKVLVHHQNRIYEAKIIKVDPKTSKSDKKKPLYFIHYLGWKEKWNEWIEPNKI) folds into the Tudor-knot domain. The tract at residues 75–212 (TNIKASTTSL…KRNDSKSSHF (138 aa)) is disordered. Low complexity predominate over residues 78–87 (KASTTSLNNK). Residues 111 to 141 (ENSDEDENESELEDGGGEDADEGGEDIEDQE) are compositionally biased toward acidic residues. Residues 165–199 (SSSSSSSSKSNNNNNNNNNNNNNNNNNNNNNNNNN) show a composition bias toward low complexity. In terms of domain architecture, MRG spans 214 to 377 (STKFIDIEIP…ASSPYLKAAS (164 aa)).

As to quaternary structure, component of the NuA4 histone acetyltransferase complex.

Its subcellular location is the nucleus. Functionally, component of the NuA4 histone acetyltransferase complex which is involved in transcriptional activation of selected genes principally by acetylation of nucleosomal histone H4 and H2A. The NuA4 complex is also involved in DNA repair. Also a component of a complex which acts to repress transcription by deacetylation of nucleosomal histones. This is NuA4 complex subunit EAF3 homolog from Dictyostelium discoideum (Social amoeba).